The sequence spans 398 residues: 1-deoxy-D-xylulose 5-phosphate reductoisomerase (398 aa).

Residues Thr-10, Gly-11, Ser-12, Ile-13, Gly-36, Asn-38, and Asn-124 each coordinate NADPH. Residue Lys-125 coordinates 1-deoxy-D-xylulose 5-phosphate. Glu-126 contacts NADPH. Asp-150 is a Mn(2+) binding site. 4 residues coordinate 1-deoxy-D-xylulose 5-phosphate: Ser-151, Glu-152, Ser-186, and His-209. Glu-152 contacts Mn(2+). Position 215 (Gly-215) interacts with NADPH. 1-deoxy-D-xylulose 5-phosphate is bound by residues Ser-222, Asn-227, Lys-228, and Glu-231. Residue Glu-231 coordinates Mn(2+).

This sequence belongs to the DXR family. As to quaternary structure, homodimer. Mg(2+) is required as a cofactor. Requires Mn(2+) as cofactor.

The enzyme catalyses 2-C-methyl-D-erythritol 4-phosphate + NADP(+) = 1-deoxy-D-xylulose 5-phosphate + NADPH + H(+). Its pathway is isoprenoid biosynthesis; isopentenyl diphosphate biosynthesis via DXP pathway; isopentenyl diphosphate from 1-deoxy-D-xylulose 5-phosphate: step 1/6. Its function is as follows. Catalyzes the NADPH-dependent rearrangement and reduction of 1-deoxy-D-xylulose-5-phosphate (DXP) to 2-C-methyl-D-erythritol 4-phosphate (MEP). The sequence is that of 1-deoxy-D-xylulose 5-phosphate reductoisomerase from Pectobacterium atrosepticum (strain SCRI 1043 / ATCC BAA-672) (Erwinia carotovora subsp. atroseptica).